The following is a 106-amino-acid chain: MDQFQHIDVQGAQALLEQGEAKLVDIRDPQSFAVAHAESAYHLTNDTIVAFMEDVEFEQPILVMCYHGISSQGAAQYLVNQGFEQVYSVDGGFEAWQRAQLPIVRS.

Positions 17–105 constitute a Rhodanese domain; sequence EQGEAKLVDI…WQRAQLPIVR (89 aa). The active-site Cysteine persulfide intermediate is Cys65.

The protein belongs to the GlpE family.

It localises to the cytoplasm. The enzyme catalyses thiosulfate + hydrogen cyanide = thiocyanate + sulfite + 2 H(+). The catalysed reaction is thiosulfate + [thioredoxin]-dithiol = [thioredoxin]-disulfide + hydrogen sulfide + sulfite + 2 H(+). Functionally, transferase that catalyzes the transfer of sulfur from thiosulfate to thiophilic acceptors such as cyanide or dithiols. May function in a CysM-independent thiosulfate assimilation pathway by catalyzing the conversion of thiosulfate to sulfite, which can then be used for L-cysteine biosynthesis. The protein is Thiosulfate sulfurtransferase GlpE of Vibrio parahaemolyticus serotype O3:K6 (strain RIMD 2210633).